The sequence spans 459 residues: Cysteine desulfurase (459 aa).

The transit peptide at 1–17 (MVGSVAGNMLLRAAWRR) directs the protein to the mitochondrion. The pyridoxal 5'-phosphate site is built by Ala-129, Thr-130, Gln-237, Ser-257, and His-259. Lys-260 carries the N6-(pyridoxal phosphate)lysine modification. Thr-297 is a pyridoxal 5'-phosphate binding site. Cys-383 serves as the catalytic Cysteine persulfide intermediate. Residue Cys-383 coordinates [2Fe-2S] cluster. Cys-383 provides a ligand contact to Zn(2+). Cys-383 carries the cysteine persulfide modification.

This sequence belongs to the class-V pyridoxal-phosphate-dependent aminotransferase family. NifS/IscS subfamily. Homodimer. Component of the mitochondrial core iron-sulfur cluster (ISC) complex composed of NFS1, LYRM4, NDUFAB1, ISCU, FXN, and FDX2; this complex is a heterohexamer containing two copies of each monomer. Component of cyteine desulfurase complex composed of NFS1, LYRM4 and NDUFAB1; this complex contributes to the activation of cysteine desulfurase activity and NFS1 stabilization. Interacts (homodimer form) with ISCU (D-state); each monomer interacts with the C-terminal regions of each NFS1 monomer. Interacts with HSPA9. Interacts (via homodimer form) with FDX2. Interacts (via homodimer form) with FXN. Interacts with LYRM4. Component of a complex composed of FXN, NFS1, LYRM4 and ISCU. Pyridoxal 5'-phosphate is required as a cofactor. Post-translationally, N-gluconoylated. Cysteine persulfide intermediate is reduced by thiol-containing molecules like glutathione and L-cysteine. Persulfide reduction is a rate-limiting step of cysteine desulfurase catalytic cycle. Ubiquitous.

It is found in the mitochondrion. It catalyses the reaction (sulfur carrier)-H + L-cysteine = (sulfur carrier)-SH + L-alanine. It carries out the reaction L-cysteinyl-[cysteine desulfurase] + L-cysteine = S-sulfanyl-L-cysteinyl-[cysteine desulfurase] + L-alanine. Its activity is regulated as follows. Active only in complex with LYRM4. Functionally, mitochondrial cysteine desulfurase, of the core iron-sulfur cluster (ISC) assembly complex, that catalyzes the desulfuration of L-cysteine to L-alanine, as component of the cysteine desulfurase complex, leading to the formation of a cysteine persulfide intermediate at the active site cysteine residue and participates in the [2Fe-2S] clusters assembly on the scaffolding protein ISCU. The persulfide is then transferred on the flexible Cys loop from the catalytic site of NFS1 to the surface of NFS1. After the NFS1-linked persulfide sulfur is transferred to one of the conserved Cys residues of the scaffold, a reaction assisted by FXN. The core iron-sulfur cluster (ISC) assembly complex is involved in the de novo synthesis of a [2Fe-2S] cluster, the first step of the mitochondrial iron-sulfur protein biogenesis. This process is initiated by the cysteine desulfurase complex (NFS1:LYRM4:NDUFAB1) that produces persulfide which is delivered on the scaffold protein ISCU in a FXN-dependent manner. Then this complex is stabilized by FDX2 which provides reducing equivalents to accomplish the [2Fe-2S] cluster assembly. Finally, the [2Fe-2S] cluster is transferred from ISCU to chaperone proteins, including HSCB, HSPA9 and GLRX5. This chain is Cysteine desulfurase, found in Mus musculus (Mouse).